The sequence spans 279 residues: tRNA pseudouridine synthase B (279 aa).

Asp-38 acts as the Nucleophile in catalysis.

Belongs to the pseudouridine synthase TruB family. Type 1 subfamily.

The enzyme catalyses uridine(55) in tRNA = pseudouridine(55) in tRNA. Responsible for synthesis of pseudouridine from uracil-55 in the psi GC loop of transfer RNAs. The polypeptide is tRNA pseudouridine synthase B (Acholeplasma laidlawii (strain PG-8A)).